The chain runs to 605 residues: Insulin-like growth factor-binding protein complex acid labile subunit (605 aa).

The first 27 residues, 1 to 27 (MALRKGGLALALLLLSWVALGPRSLEG), serve as a signal peptide directing secretion. The LRRNT domain occupies 32-74 (TPGEAEGPACPAACVCSYDDDADELSVFCSSRNLTRLPDGVPG). 2 cysteine pairs are disulfide-bonded: Cys-41-Cys-47 and Cys-45-Cys-60. N-linked (GlcNAc...) asparagine glycosylation is found at Asn-64, Asn-85, and Asn-96. LRR repeat units lie at residues 75–96 (GTQA…AFQN), 99–120 (SLGF…ALLG), 123–144 (NLCH…TFAH), 147–168 (ALAS…LFEG), 171–192 (SLWD…AFRG), 195–216 (SLRE…LFSG), 219–240 (ELRE…VFVQ), 243–264 (RLQK…AFLG), 267–288 (ALRW…TFPG), 291–312 (GLRV…TFKD), 315–336 (FLEE…SFEG), 339–360 (QLEV…AFLG), 363–384 (NVAV…VFRG), 387–408 (KLHS…TFTG), 411–432 (GLRR…SLWG), 435–456 (ELLE…LFQG), 459–480 (KLEY…ALGP), 483–504 (RAFW…LLAP), and 507–528 (RLRY…PPGL). N-linked (GlcNAc...) asparagine glycosylation occurs at Asn-368. Asn-515 is a glycosylation site (N-linked (GlcNAc...) asparagine). One can recognise an LRRCT domain in the interval 536-605 (NPWDCGCPLK…DLSEAHFAPC (70 aa)). 3 cysteine pairs are disulfide-bonded: Cys-540–Cys-583, Cys-542–Cys-605, and Cys-566–Cys-571. The N-linked (GlcNAc...) asparagine glycan is linked to Asn-580.

In terms of assembly, forms a ternary complex with IGF1 and IGFBP3. Plasma.

The protein resides in the secreted. It is found in the extracellular space. In terms of biological role, involved in protein-protein interactions that result in protein complexes, receptor-ligand binding or cell adhesion. This Homo sapiens (Human) protein is Insulin-like growth factor-binding protein complex acid labile subunit (IGFALS).